Consider the following 316-residue polypeptide: Pyridoxal 5'-phosphate synthase subunit PdxS (316 aa).

Asp44 contacts D-ribose 5-phosphate. The active-site Schiff-base intermediate with D-ribose 5-phosphate is Lys101. Position 173 (Gly173) interacts with D-ribose 5-phosphate. Residue Lys185 participates in D-glyceraldehyde 3-phosphate binding. Residues Gly234 and 255–256 contribute to the D-ribose 5-phosphate site; that span reads GS.

Belongs to the PdxS/SNZ family. In the presence of PdxT, forms a dodecamer of heterodimers.

The enzyme catalyses aldehydo-D-ribose 5-phosphate + D-glyceraldehyde 3-phosphate + L-glutamine = pyridoxal 5'-phosphate + L-glutamate + phosphate + 3 H2O + H(+). It participates in cofactor biosynthesis; pyridoxal 5'-phosphate biosynthesis. Functionally, catalyzes the formation of pyridoxal 5'-phosphate from ribose 5-phosphate (RBP), glyceraldehyde 3-phosphate (G3P) and ammonia. The ammonia is provided by the PdxT subunit. Can also use ribulose 5-phosphate and dihydroxyacetone phosphate as substrates, resulting from enzyme-catalyzed isomerization of RBP and G3P, respectively. This is Pyridoxal 5'-phosphate synthase subunit PdxS from Sulfurisphaera tokodaii (strain DSM 16993 / JCM 10545 / NBRC 100140 / 7) (Sulfolobus tokodaii).